The following is a 158-amino-acid chain: MVYFVAFFCFAITLHNIEEAIWLPEWSQQSSKFQKPVTSNEFHFAVIVITMLAYLSAFGFLYMPESDIAKWIFIGFLGSMVINAIFPHLIATVVMKKYAPGLLTGLLLNIPVNSLVIYQMFLKNLIVWKELIISTLVVGIILLALIPLLFKVGDKVSP.

Helical transmembrane passes span phenylalanine 42 to tyrosine 62, tryptophan 71 to alanine 91, leucine 102 to leucine 122, and glutamate 130 to phenylalanine 150.

Its subcellular location is the cell membrane. This is an uncharacterized protein from Bacillus subtilis (strain 168).